We begin with the raw amino-acid sequence, 243 residues long: Aldehyde decarbonylase (243 aa).

E45, E73, H76, E128, and H160 together coordinate Fe cation.

The protein belongs to the aldehyde decarbonylase family. The cofactor is Binds 2 metal cations per subunit. The catalytic dinuclear metal-binding site could be either a di-iron or a manganese-iron cofactor..

The catalysed reaction is a long-chain fatty aldehyde + 2 NADPH + O2 + H(+) = a long-chain alkane + formate + 2 NADP(+) + H2O. Functionally, catalyzes the decarbonylation of fatty aldehydes to alkanes. Requires the presence of ferredoxin, ferredoxin reductase and NADPH for in vitro decarbonylase activity. Involved in the biosynthesis of alkanes, mainly heptadecane and pentadecane. The sequence is that of Aldehyde decarbonylase from Prochlorococcus marinus (strain MIT 9313).